The primary structure comprises 369 residues: DNA polymerase IV 2 (369 aa).

Residues 17–201 enclose the UmuC domain; that stretch reads VFHVDMDSFF…LPVSRIPGVG (185 aa). Asp21 and Asp119 together coordinate Mg(2+). The active site involves Glu120.

The protein belongs to the DNA polymerase type-Y family. In terms of assembly, monomer. Mg(2+) is required as a cofactor.

It localises to the cytoplasm. It catalyses the reaction DNA(n) + a 2'-deoxyribonucleoside 5'-triphosphate = DNA(n+1) + diphosphate. Poorly processive, error-prone DNA polymerase involved in untargeted mutagenesis. Copies undamaged DNA at stalled replication forks, which arise in vivo from mismatched or misaligned primer ends. These misaligned primers can be extended by PolIV. Exhibits no 3'-5' exonuclease (proofreading) activity. May be involved in translesional synthesis. The chain is DNA polymerase IV 2 (dbh2) from Methanosarcina mazei (strain ATCC BAA-159 / DSM 3647 / Goe1 / Go1 / JCM 11833 / OCM 88) (Methanosarcina frisia).